The sequence spans 401 residues: Acetate kinase (401 aa).

Asn-9 is a Mg(2+) binding site. Lys-16 is an ATP binding site. Position 88 (Arg-88) interacts with substrate. Asp-147 functions as the Proton donor/acceptor in the catalytic mechanism. ATP is bound by residues 207-211, 282-284, and 333-337; these read HLGNG, DCR, and GIGEN. Glu-388 is a binding site for Mg(2+).

Belongs to the acetokinase family. As to quaternary structure, homodimer. Mg(2+) is required as a cofactor. The cofactor is Mn(2+).

The protein resides in the cytoplasm. It carries out the reaction acetate + ATP = acetyl phosphate + ADP. It functions in the pathway metabolic intermediate biosynthesis; acetyl-CoA biosynthesis; acetyl-CoA from acetate: step 1/2. Catalyzes the formation of acetyl phosphate from acetate and ATP. Can also catalyze the reverse reaction. The polypeptide is Acetate kinase (Haemophilus influenzae (strain PittGG)).